Reading from the N-terminus, the 622-residue chain is Chaperone protein HscA homolog (622 aa).

This sequence belongs to the heat shock protein 70 family.

Functionally, chaperone involved in the maturation of iron-sulfur cluster-containing proteins. Has a low intrinsic ATPase activity which is markedly stimulated by HscB. The protein is Chaperone protein HscA homolog of Aromatoleum aromaticum (strain DSM 19018 / LMG 30748 / EbN1) (Azoarcus sp. (strain EbN1)).